The primary structure comprises 191 residues: Ribonuclease HII (191 aa).

In terms of domain architecture, RNase H type-2 spans 16–191 (INLIGIDEAG…KLHRKSFKLL (176 aa)). The a divalent metal cation site is built by D22, E23, and D110.

This sequence belongs to the RNase HII family. The cofactor is Mn(2+). It depends on Mg(2+) as a cofactor.

It localises to the cytoplasm. The enzyme catalyses Endonucleolytic cleavage to 5'-phosphomonoester.. Its function is as follows. Endonuclease that specifically degrades the RNA of RNA-DNA hybrids. This chain is Ribonuclease HII, found in Campylobacter jejuni subsp. doylei (strain ATCC BAA-1458 / RM4099 / 269.97).